Consider the following 956-residue polypeptide: Glutamate receptor ionotropic, kainate 4 (956 aa).

The N-terminal stretch at Met1 to Cys20 is a signal peptide. Residues Ser21 to Pro545 lie on the Extracellular side of the membrane. Asn158, Asn220, Asn272, Asn286, Asn323, Asn408, Asn415, and Asn479 each carry an N-linked (GlcNAc...) asparagine glycan. L-glutamate is bound by residues Gly500, Thr502, and Arg507. Residues Gly546–Ala566 form a helical membrane-spanning segment. The Cytoplasmic segment spans residues Arg567–Gly623. A helical membrane pass occupies residues Val624–Leu644. Residues Thr645–Asn804 lie on the Extracellular side of the membrane. 3 residues coordinate L-glutamate: Ser674, Ser675, and Glu723. Residue Asn736 is glycosylated (N-linked (GlcNAc...) asparagine). The chain crosses the membrane as a helical span at residues Ile805 to Leu825. At Glu826–Glu956 the chain is on the cytoplasmic side. Disordered stretches follow at residues Arg863–Asn889 and Leu931–Glu956. Basic and acidic residues predominate over residues Arg939 to Lys948.

The protein belongs to the glutamate-gated ion channel (TC 1.A.10.1) family. GRIK4 subfamily. Homodimer. Can form functional heteromeric receptors with GRIK1, GRIK2 and GRIK3.

It localises to the cell membrane. The protein resides in the postsynaptic cell membrane. It is found in the presynaptic cell membrane. In terms of biological role, ionotropic glutamate receptor that functions as a cation-permeable ligand-gated ion channel. Cannot form functional channels on its own. Shows channel activity only in heteromeric assembly with GRIK1, GRIK2 and GRIK3 subunits. In Homo sapiens (Human), this protein is Glutamate receptor ionotropic, kainate 4 (GRIK4).